Consider the following 459-residue polypeptide: Cysteine--tRNA ligase (459 aa).

Cys-28 contacts Zn(2+). The short motif at Val-30 to His-40 is the 'HIGH' region element. Zn(2+)-binding residues include Cys-209, His-234, and Glu-238. Positions Lys-266 to Ser-270 match the 'KMSKS' region motif. Lys-269 serves as a coordination point for ATP.

The protein belongs to the class-I aminoacyl-tRNA synthetase family. Monomer. Zn(2+) serves as cofactor.

The protein localises to the cytoplasm. The catalysed reaction is tRNA(Cys) + L-cysteine + ATP = L-cysteinyl-tRNA(Cys) + AMP + diphosphate. The protein is Cysteine--tRNA ligase of Shewanella amazonensis (strain ATCC BAA-1098 / SB2B).